The sequence spans 221 residues: Zingipain-2 (221 aa).

2 disulfides stabilise this stretch: Cys-24–Cys-65 and Cys-58–Cys-98. Residue Cys-27 is part of the active site. Residues Asn-99 and Asn-156 are each glycosylated (N-linked (GlcNAc...) asparagine). A disulfide bond links Cys-155 and Cys-206. His-161 is an active-site residue.

Belongs to the peptidase C1 family.

The catalysed reaction is Preferential cleavage of peptides with a proline residue at the P2 position.. Cysteine proteinase with a specific activity toward peptides with a proline residue at the P2 position. This is Zingipain-2 from Zingiber officinale (Ginger).